A 391-amino-acid polypeptide reads, in one-letter code: Small ribosomal subunit protein mS29 (391 aa).

Residues 1 to 17 (MLTGITRLFSRVQKLDP) constitute a mitochondrion transit peptide. A disordered region spans residues 30-59 (NSQVPAERPRTVSRTSDSDPAKHGEQHEGQ). The span at 45 to 59 (SDSDPAKHGEQHEGQ) shows a compositional bias: basic and acidic residues. N6-acetyllysine occurs at positions 168 and 200.

It belongs to the mitochondrion-specific ribosomal protein mS29 family. Component of the mitochondrial ribosome small subunit (28S) which comprises a 12S rRNA and about 30 distinct proteins. Interacts with DELE1. Interacts with NOA1.

The protein resides in the mitochondrion. The enzyme catalyses GTP + H2O = GDP + phosphate + H(+). As a component of the mitochondrial small ribosomal subunit, it plays a role in the translation of mitochondrial mRNAs. Involved in mediating interferon-gamma-induced cell death. Displays GTPase activity in vitro. This is Small ribosomal subunit protein mS29 from Mus musculus (Mouse).